We begin with the raw amino-acid sequence, 487 residues long: Protein nucleotidyltransferase YdiU (487 aa).

Residues glycine 90, glycine 92, arginine 93, lysine 113, aspartate 125, glycine 126, arginine 176, and arginine 183 each contribute to the ATP site. Aspartate 252 acts as the Proton acceptor in catalysis. Residues asparagine 253 and aspartate 262 each coordinate Mg(2+). Aspartate 262 lines the ATP pocket.

This sequence belongs to the SELO family. Mg(2+) is required as a cofactor. Requires Mn(2+) as cofactor.

It catalyses the reaction L-seryl-[protein] + ATP = 3-O-(5'-adenylyl)-L-seryl-[protein] + diphosphate. The enzyme catalyses L-threonyl-[protein] + ATP = 3-O-(5'-adenylyl)-L-threonyl-[protein] + diphosphate. The catalysed reaction is L-tyrosyl-[protein] + ATP = O-(5'-adenylyl)-L-tyrosyl-[protein] + diphosphate. It carries out the reaction L-histidyl-[protein] + UTP = N(tele)-(5'-uridylyl)-L-histidyl-[protein] + diphosphate. It catalyses the reaction L-seryl-[protein] + UTP = O-(5'-uridylyl)-L-seryl-[protein] + diphosphate. The enzyme catalyses L-tyrosyl-[protein] + UTP = O-(5'-uridylyl)-L-tyrosyl-[protein] + diphosphate. Nucleotidyltransferase involved in the post-translational modification of proteins. It can catalyze the addition of adenosine monophosphate (AMP) or uridine monophosphate (UMP) to a protein, resulting in modifications known as AMPylation and UMPylation. This is Protein nucleotidyltransferase YdiU from Ectopseudomonas mendocina (strain ymp) (Pseudomonas mendocina).